The following is a 321-amino-acid chain: Lipoyl synthase (321 aa).

Cys-68, Cys-73, Cys-79, Cys-94, Cys-98, Cys-101, and Ser-308 together coordinate [4Fe-4S] cluster. A Radical SAM core domain is found at 80 to 297 (FNHGTATFMI…KAEALAMGFT (218 aa)).

This sequence belongs to the radical SAM superfamily. Lipoyl synthase family. [4Fe-4S] cluster is required as a cofactor.

The protein resides in the cytoplasm. It carries out the reaction [[Fe-S] cluster scaffold protein carrying a second [4Fe-4S](2+) cluster] + N(6)-octanoyl-L-lysyl-[protein] + 2 oxidized [2Fe-2S]-[ferredoxin] + 2 S-adenosyl-L-methionine + 4 H(+) = [[Fe-S] cluster scaffold protein] + N(6)-[(R)-dihydrolipoyl]-L-lysyl-[protein] + 4 Fe(3+) + 2 hydrogen sulfide + 2 5'-deoxyadenosine + 2 L-methionine + 2 reduced [2Fe-2S]-[ferredoxin]. It functions in the pathway protein modification; protein lipoylation via endogenous pathway; protein N(6)-(lipoyl)lysine from octanoyl-[acyl-carrier-protein]: step 2/2. Functionally, catalyzes the radical-mediated insertion of two sulfur atoms into the C-6 and C-8 positions of the octanoyl moiety bound to the lipoyl domains of lipoate-dependent enzymes, thereby converting the octanoylated domains into lipoylated derivatives. This Escherichia fergusonii (strain ATCC 35469 / DSM 13698 / CCUG 18766 / IAM 14443 / JCM 21226 / LMG 7866 / NBRC 102419 / NCTC 12128 / CDC 0568-73) protein is Lipoyl synthase.